The following is a 572-amino-acid chain: 3-ketosteroid oxygenase (572 aa).

2 consecutive transmembrane segments (helical) span residues 52-72 (AFALSHHIIMGIYLLILRNFL) and 84-104 (YFMRVFIVHIIYIIISYFIRI).

The protein belongs to the cytochrome P450 family. As to expression, expressed in the 2 embryonic head hypodermal cells XXXL/R.

The protein resides in the membrane. The enzyme catalyses 5alpha-cholest-7-en-3-one + 3 reduced [NADPH--hemoprotein reductase] + 3 O2 = (25S)-Delta7-dafachronate + 3 oxidized [NADPH--hemoprotein reductase] + 4 H2O + 4 H(+). The catalysed reaction is cholest-4-en-3-one + 3 reduced [NADPH--hemoprotein reductase] + 3 O2 = (25S)-3-oxocholest-4-en-26-oate + 3 oxidized [NADPH--hemoprotein reductase] + 4 H2O + 4 H(+). It functions in the pathway steroid hormone biosynthesis; dafachronic acid biosynthesis. Its function is as follows. Converts the 3-keto steroids 4-cholesten-3-one and lathosterone into the carboxylic metabolites 3-keto-4-cholestenate (Delta(4)-dafachronic acid, Delta(4)-DA) and 3-keto-7,(5a)-cholestenate (Delta(7)-dafachronic acid, Delta(7)-DA) respectively, by catalyzing successive oxidations at C-26. Dafachronic acids bind directly to the nuclear hormone receptor (NHR) DAF-12, suppressing dauer formation and inducing reproductive growth. In a non-cell autonomous manner, negatively regulates body wall muscle arm extensions to motor neurons probably by preventing daf-12 isoform b activation. May be involved in thermotolerance. The polypeptide is 3-ketosteroid oxygenase (daf-9) (Caenorhabditis elegans).